The following is a 633-amino-acid chain: MVNKYTYTSSKAMSDISDVIGEPLAAWDSQVGGRVFNVIFDGKVYTNTYWVERWQVPGIGSSDGNPHNAWKFVRAATADEINKIGNPTTADVKPTENIPSPILVEDKYTEETYSRPDVNFKEDGSQGNLSYTATRVCAPMYNHYVGDKTKPKLSAYITDWCQYDARLDGGGSKEEERGRGFDLATLMQNPATYDRLIFSFLGICGDIGNKSKKVQEVWDGWNAQAPSLGLPQIGKGHIVPLDPYGDLGTARNVGLPPESADTSIESGTFLPYYQQNRAAGLLGGLRELQKKAHAMGHKLDLAFSIGGWSLSSYFSALAENPDERRVFVASVVDFFVRFPMFSCVDIDWEYPGGGGDEGNISSDKDGENYVLLIKELRSALDSRFGYSNRKEISIACSGVKAKLKKSNIDQLVANGLDNIYLMSYDFFGTIWADYIGHHTNLYSPKDPGEQELFDLSAEAAIDYLHNELGIPMEKIHLGYANYGRSAVGGDLTTRQYTKNGPALGTMENGAPEFFDIVKNYMDAEHSLSMGKNGFVLMTDTNADADFLFSEAKGHFISLDTPRTVKQKGEYAAKNKLGGVFSWSGDQDCGLLANAAREGLGYVADSNQETIDMGPLYNPGKEIYLKSISEIKSK.

The region spanning 151-602 is the GH18 domain; the sequence is PKLSAYITDW…NAAREGLGYV (452 aa). Chitin contacts are provided by residues 275–276 and 306–309; these read QN and GGWS. The active-site Proton donor is the glutamate 349. Chitin is bound by residues tyrosine 350, 422–425, and tryptophan 582; that span reads MSYD.

The protein belongs to the glycosyl hydrolase 18 family. As to quaternary structure, semipurified toxin complex consists of at least YenA1-YenA2-YenB-YenC1-YenC2-Chi1-Chi2. The Yen-TC:K9 subcomplex is about 26 nm tall and 22 nm in diameter with 5-fold symmetry and 5 copies of YenA1, YenA2, Chi1 and Chi2; the chitinase subunits may be solvent accessible on the exterior the complex. The Yen-TC:K9 subcomplex has no insecticidal activity. The native complex with additional YenB, YenC1 and YenC2 subunits is 16 nm taller and is insecticidal; the toxicity-conferring subunits are present at about 1 copy each.

It is found in the secreted. It catalyses the reaction Random endo-hydrolysis of N-acetyl-beta-D-glucosaminide (1-&gt;4)-beta-linkages in chitin and chitodextrins.. Its activity is regulated as follows. Toxin complex is secreted when grown at 25 degrees Celsius or less; at higher temperatures the proteins are present intracellularly but not secreted. Its function is as follows. Part of an orally active toxin complex (TC) with strong insecticidal effects on larvae of the Coleoptera Costelytra zealandica, Acrossidius tasmania and Adoryphorus couloni and some Lepidoptera larvae. The TC has an endochitinase activity. This subunit might aid infection by degradation of the larval peritrophic membrane. The sequence is that of Chitinase 2 from Yersinia entomophaga.